A 60-amino-acid polypeptide reads, in one-letter code: Large ribosomal subunit protein bL32 (60 aa).

Over residues 1–20 (MACPKKKTSKSKRSMRRAAW) the composition is skewed to basic residues. The interval 1-22 (MACPKKKTSKSKRSMRRAAWKR) is disordered.

Belongs to the bacterial ribosomal protein bL32 family.

In Thermosynechococcus vestitus (strain NIES-2133 / IAM M-273 / BP-1), this protein is Large ribosomal subunit protein bL32.